A 287-amino-acid polypeptide reads, in one-letter code: Lactamase-like protein nscB (287 aa).

H62, H64, D66, and H67 together coordinate Zn(2+). D66 (proton donor/acceptor) is an active-site residue.

The protein belongs to the metallo-beta-lactamase superfamily. Requires Zn(2+) as cofactor.

Its pathway is secondary metabolite biosynthesis. Functionally, lactamase-like protein; part of the gene cluster that mediates the biosynthesis of neosartoricin B, a prenylated anthracenone that probably exhibits T-cell antiproliferative activity, suggestive of a physiological role as an immunosuppressive agent. The non-reducing polyketide synthase nscA probably synthesizes and cyclizes the decaketide backbone. The hydrolase nscB then mediates the product release through hydrolysis followed by spontaneous decarboxylation. The prenyltransferase nscD catalyzes the addition of the dimethylallyl group to the aromatic C5. The FAD-dependent monooxygenase nscC is then responsible for the stereospecific hydroxylation at C2. Neosartoricin B can be converted into two additional compounds neosartoricins C and D. Neosartoricin C is a spirocyclic compound that is cyclized through the attack of C3 hydroxyl on C14, followed by dehydration. On the other hand, neosartoricin D is a further cyclized compound in which attack of C2 on C14 in neosartoricin C results in the formation of the acetal-containing dioxabicyclo-octanone ring. Both of these compounds are novel and possibly represent related metabolites of the gene cluster. This chain is Lactamase-like protein nscB, found in Trichophyton verrucosum (strain HKI 0517).